Reading from the N-terminus, the 235-residue chain is MSVHIEAKQGEIAESILLPGDPLRAKYIAETFLEDVTCYNNVRGMLGFTGTYKGKRVSVQGTGMGVPSISIYVNELIQSYGVKNLIRVGTCGAIQKDVKVRDVIIAMTACTDSNMNRLTFPGFDFAPAANFDLLKKAYDAGTEKGLHVRVGNVLTADVFYRESMDMVKKLADYGVLAVEMETTALYTLAAKYGVNALSVLTVSDHIFTGEETTSEERQTTFNEMIEIALDAAIQQ.

His4 is an a purine D-ribonucleoside binding site. Residues Gly20, Arg24, Arg43, and 87–90 (RVGT) each bind phosphate. Residues Glu162, 179-181 (EME), and 203-204 (SD) contribute to the a purine D-ribonucleoside site. Asp204 acts as the Proton donor in catalysis.

Belongs to the PNP/UDP phosphorylase family. In terms of assembly, homohexamer; trimer of homodimers.

The catalysed reaction is a purine D-ribonucleoside + phosphate = a purine nucleobase + alpha-D-ribose 1-phosphate. It catalyses the reaction a purine 2'-deoxy-D-ribonucleoside + phosphate = a purine nucleobase + 2-deoxy-alpha-D-ribose 1-phosphate. Its function is as follows. Catalyzes the reversible phosphorolytic breakdown of the N-glycosidic bond in the beta-(deoxy)ribonucleoside molecules, with the formation of the corresponding free purine bases and pentose-1-phosphate. The polypeptide is Purine nucleoside phosphorylase DeoD-type (Bacillus cereus (strain ZK / E33L)).